A 353-amino-acid polypeptide reads, in one-letter code: rRNA methyltransferase 1, mitochondrial (353 aa).

The transit peptide at M1–F20 directs the protein to the mitochondrion. The tract at residues P311–G353 is disordered.

Belongs to the class IV-like SAM-binding methyltransferase superfamily. RNA methyltransferase TrmH family.

The protein resides in the mitochondrion matrix. It catalyses the reaction guanosine(1145) in 16S rRNA + S-adenosyl-L-methionine = 2'-O-methylguanosine(1145) in 16S rRNA + S-adenosyl-L-homocysteine + H(+). In terms of biological role, S-adenosyl-L-methionine-dependent 2'-O-ribose methyltransferase that catalyzes the formation of 2'-O-methylguanosine at position 1145 (Gm1145) in the 16S mitochondrial large subunit ribosomal RNA (mtLSU rRNA), a universally conserved modification in the peptidyl transferase domain of the mtLSU rRNA. The protein is rRNA methyltransferase 1, mitochondrial of Homo sapiens (Human).